Consider the following 188-residue polypeptide: ADP-ribosylation factor J (188 aa).

GTP contacts are provided by residues 34–40, 75–79, and 134–137; these read DGAGKST, DVGGQ, and NKQD.

The protein belongs to the small GTPase superfamily. Arf family.

The protein resides in the golgi apparatus. GTP-binding protein that may be involved in protein trafficking. May modulate vesicle budding and uncoating within the Golgi apparatus. In Dictyostelium discoideum (Social amoeba), this protein is ADP-ribosylation factor J (arrJ).